The following is a 449-amino-acid chain: Probable glycine dehydrogenase (decarboxylating) subunit 1 (449 aa).

Belongs to the GcvP family. N-terminal subunit subfamily. The glycine cleavage system is composed of four proteins: P, T, L and H. In this organism, the P 'protein' is a heterodimer of two subunits.

The enzyme catalyses N(6)-[(R)-lipoyl]-L-lysyl-[glycine-cleavage complex H protein] + glycine + H(+) = N(6)-[(R)-S(8)-aminomethyldihydrolipoyl]-L-lysyl-[glycine-cleavage complex H protein] + CO2. In terms of biological role, the glycine cleavage system catalyzes the degradation of glycine. The P protein binds the alpha-amino group of glycine through its pyridoxal phosphate cofactor; CO(2) is released and the remaining methylamine moiety is then transferred to the lipoamide cofactor of the H protein. This Pyrococcus horikoshii (strain ATCC 700860 / DSM 12428 / JCM 9974 / NBRC 100139 / OT-3) protein is Probable glycine dehydrogenase (decarboxylating) subunit 1.